We begin with the raw amino-acid sequence, 137 residues long: Large ribosomal subunit protein uL16c (137 aa).

It belongs to the universal ribosomal protein uL16 family. As to quaternary structure, part of the 50S ribosomal subunit.

It localises to the plastid. This Aneura mirabilis (Parasitic liverwort) protein is Large ribosomal subunit protein uL16c.